A 961-amino-acid polypeptide reads, in one-letter code: Roundabout homolog 4 (961 aa).

The signal sequence occupies residues 1-37; sequence MGQGEELRAAVDSGGMGLLGTKCPLPLLLLFIMGGKA. 2 Ig-like C2-type domains span residues 42–142 and 148–235; these read PQIL…ARLS and EDFR…ARVS. Intrachain disulfides connect Cys63/Cys125 and Cys169/Cys218. 2 N-linked (GlcNAc...) asparagine glycosylation sites follow: Asn211 and Asn257. 2 consecutive Fibronectin type-III domains span residues 259–356 and 358–453; these read TLLN…LPEQ and PSAP…LEQA. 3 N-linked (GlcNAc...) asparagine glycosylation sites follow: Asn371, Asn400, and Asn407. A compositionally biased stretch (low complexity) spans 544–559; the sequence is SGSRDLSSSSSLSSRL. Disordered stretches follow at residues 544 to 563 and 600 to 634; these read SGSRDLSSSSSLSSRLGVDP and QTSSPPVRPSPQTPAARRLPPKLTGTSSPWASSDS. Residues 623-634 show a composition bias toward polar residues; it reads TGTSSPWASSDS. N-linked (GlcNAc...) asparagine glycosylation is found at Asn691 and Asn723. Residues 726 to 810 form a disordered region; it reads ELAARPLPPT…SLEEEDQDSV (85 aa). The segment covering 755 to 769 has biased composition (low complexity); that stretch reads LQAPSSDPLPAAPLS. Residues 770–783 show a composition bias toward polar residues; the sequence is VLNSSRPSSPQASF. N-linked (GlcNAc...) asparagine glycans are attached at residues Asn772 and Asn793. The segment covering 784–801 has biased composition (low complexity); that stretch reads LSVPSPGSSNLSSSSLSS. Phosphoserine is present on Ser823.

Belongs to the immunoglobulin superfamily. ROBO family. Interacts with SLIT2 and ENAH.

Functionally, receptor for Slit proteins, at least for SLIT2, and seems to be involved in angiogenesis and vascular patterning. May mediate the inhibition of primary endothelial cell migration by Slit proteins. Involved in the maintenance of endothelial barrier organization and function. The protein is Roundabout homolog 4 (Robo4) of Rattus norvegicus (Rat).